The sequence spans 213 residues: Translation initiation factor IF-3 (213 aa).

The tract at residues 193 to 213 is disordered; the sequence is EKIASLPPLPPDNSGEPEDDE.

The protein belongs to the IF-3 family. Monomer.

It localises to the cytoplasm. In terms of biological role, IF-3 binds to the 30S ribosomal subunit and shifts the equilibrium between 70S ribosomes and their 50S and 30S subunits in favor of the free subunits, thus enhancing the availability of 30S subunits on which protein synthesis initiation begins. This Chlorobaculum tepidum (strain ATCC 49652 / DSM 12025 / NBRC 103806 / TLS) (Chlorobium tepidum) protein is Translation initiation factor IF-3.